A 768-amino-acid polypeptide reads, in one-letter code: Phosphoribosylformylglycinamidine synthase subunit PurL (768 aa).

H44 is a catalytic residue. Residues Y47 and K86 each contribute to the ATP site. E88 serves as a coordination point for Mg(2+). Residues 89 to 92 (SHNH) and R111 each bind substrate. H90 acts as the Proton acceptor in catalysis. Residue D112 coordinates Mg(2+). Q235 is a binding site for substrate. D263 serves as a coordination point for Mg(2+). 307-309 (ESQ) lines the substrate pocket. ATP-binding residues include D518 and G555. N556 contacts Mg(2+). Position 558 (S558) interacts with substrate.

This sequence belongs to the FGAMS family. In terms of assembly, monomer. Part of the FGAM synthase complex composed of 1 PurL, 1 PurQ and 2 PurS subunits.

It localises to the cytoplasm. It carries out the reaction N(2)-formyl-N(1)-(5-phospho-beta-D-ribosyl)glycinamide + L-glutamine + ATP + H2O = 2-formamido-N(1)-(5-O-phospho-beta-D-ribosyl)acetamidine + L-glutamate + ADP + phosphate + H(+). It participates in purine metabolism; IMP biosynthesis via de novo pathway; 5-amino-1-(5-phospho-D-ribosyl)imidazole from N(2)-formyl-N(1)-(5-phospho-D-ribosyl)glycinamide: step 1/2. Its function is as follows. Part of the phosphoribosylformylglycinamidine synthase complex involved in the purines biosynthetic pathway. Catalyzes the ATP-dependent conversion of formylglycinamide ribonucleotide (FGAR) and glutamine to yield formylglycinamidine ribonucleotide (FGAM) and glutamate. The FGAM synthase complex is composed of three subunits. PurQ produces an ammonia molecule by converting glutamine to glutamate. PurL transfers the ammonia molecule to FGAR to form FGAM in an ATP-dependent manner. PurS interacts with PurQ and PurL and is thought to assist in the transfer of the ammonia molecule from PurQ to PurL. This chain is Phosphoribosylformylglycinamidine synthase subunit PurL, found in Synechococcus sp. (strain JA-2-3B'a(2-13)) (Cyanobacteria bacterium Yellowstone B-Prime).